Here is a 376-residue protein sequence, read N- to C-terminus: Erythronate-4-phosphate dehydrogenase (376 aa).

Substrate contacts are provided by S45 and T66. Residues D146 and T175 each coordinate NAD(+). The active site involves R209. D233 is a binding site for NAD(+). The active site involves E238. H255 acts as the Proton donor in catalysis. G258 is a binding site for NAD(+). Y259 is a binding site for substrate.

The protein belongs to the D-isomer specific 2-hydroxyacid dehydrogenase family. PdxB subfamily. Homodimer.

Its subcellular location is the cytoplasm. The catalysed reaction is 4-phospho-D-erythronate + NAD(+) = (R)-3-hydroxy-2-oxo-4-phosphooxybutanoate + NADH + H(+). It participates in cofactor biosynthesis; pyridoxine 5'-phosphate biosynthesis; pyridoxine 5'-phosphate from D-erythrose 4-phosphate: step 2/5. Functionally, catalyzes the oxidation of erythronate-4-phosphate to 3-hydroxy-2-oxo-4-phosphonooxybutanoate. The protein is Erythronate-4-phosphate dehydrogenase of Baumannia cicadellinicola subsp. Homalodisca coagulata.